The primary structure comprises 103 residues: Integration host factor subunit beta (103 aa).

A disordered region spans residues 62-81 (RNPKTGESVALPGKHVPHFK).

It belongs to the bacterial histone-like protein family. As to quaternary structure, heterodimer of an alpha and a beta chain.

Functionally, this protein is one of the two subunits of integration host factor, a specific DNA-binding protein that functions in genetic recombination as well as in transcriptional and translational control. This is Integration host factor subunit beta from Xanthomonas axonopodis pv. citri (strain 306).